The sequence spans 413 residues: Serine hydroxymethyltransferase (413 aa).

(6S)-5,6,7,8-tetrahydrofolate is bound by residues Leu117 and 121–123 (GHL). The residue at position 226 (Lys226) is an N6-(pyridoxal phosphate)lysine. Residues Glu239 and 349–351 (SPF) contribute to the (6S)-5,6,7,8-tetrahydrofolate site.

This sequence belongs to the SHMT family. In terms of assembly, homodimer. The cofactor is pyridoxal 5'-phosphate.

It is found in the cytoplasm. The catalysed reaction is (6R)-5,10-methylene-5,6,7,8-tetrahydrofolate + glycine + H2O = (6S)-5,6,7,8-tetrahydrofolate + L-serine. It functions in the pathway one-carbon metabolism; tetrahydrofolate interconversion. Its pathway is amino-acid biosynthesis; glycine biosynthesis; glycine from L-serine: step 1/1. Its function is as follows. Catalyzes the reversible interconversion of serine and glycine with tetrahydrofolate (THF) serving as the one-carbon carrier. This reaction serves as the major source of one-carbon groups required for the biosynthesis of purines, thymidylate, methionine, and other important biomolecules. Also exhibits THF-independent aldolase activity toward beta-hydroxyamino acids, producing glycine and aldehydes, via a retro-aldol mechanism. This Bacillus cytotoxicus (strain DSM 22905 / CIP 110041 / 391-98 / NVH 391-98) protein is Serine hydroxymethyltransferase.